Reading from the N-terminus, the 366-residue chain is NADH-quinone oxidoreductase subunit D (366 aa).

It belongs to the complex I 49 kDa subunit family. As to quaternary structure, NDH-1 is composed of 14 different subunits. Subunits NuoB, C, D, E, F, and G constitute the peripheral sector of the complex.

It localises to the cell membrane. It carries out the reaction a quinone + NADH + 5 H(+)(in) = a quinol + NAD(+) + 4 H(+)(out). Functionally, NDH-1 shuttles electrons from NADH, via FMN and iron-sulfur (Fe-S) centers, to quinones in the respiratory chain. The immediate electron acceptor for the enzyme in this species is believed to be a menaquinone. Couples the redox reaction to proton translocation (for every two electrons transferred, four hydrogen ions are translocated across the cytoplasmic membrane), and thus conserves the redox energy in a proton gradient. The sequence is that of NADH-quinone oxidoreductase subunit D from Geobacillus thermodenitrificans (strain NG80-2).